The primary structure comprises 663 residues: UvrABC system protein B (663 aa).

Basic and acidic residues predominate over residues 1–10 (MIDKRDDKPF). The tract at residues 1–23 (MIDKRDDKPFKLKSKYKPSGDQP) is disordered. Positions 31 to 418 (DNIEGGEKAQ…TNTIIEQIIR (388 aa)) constitute a Helicase ATP-binding domain. Position 44–51 (44–51 (GATGTGKT)) interacts with ATP. The Beta-hairpin signature appears at 97–120 (YYDYYQPEAYVPSSDTYIEKDSSV). Residues 435 to 601 (QMDDLLGEIN…TIKKDIRGLI (167 aa)) enclose the Helicase C-terminal domain. The 36-residue stretch at 627 to 662 (KEAINALQKQMQEAAELLDFELAAQMRDLILELKLM) folds into the UVR domain.

The protein belongs to the UvrB family. As to quaternary structure, forms a heterotetramer with UvrA during the search for lesions. Interacts with UvrC in an incision complex.

Its subcellular location is the cytoplasm. Its function is as follows. The UvrABC repair system catalyzes the recognition and processing of DNA lesions. A damage recognition complex composed of 2 UvrA and 2 UvrB subunits scans DNA for abnormalities. Upon binding of the UvrA(2)B(2) complex to a putative damaged site, the DNA wraps around one UvrB monomer. DNA wrap is dependent on ATP binding by UvrB and probably causes local melting of the DNA helix, facilitating insertion of UvrB beta-hairpin between the DNA strands. Then UvrB probes one DNA strand for the presence of a lesion. If a lesion is found the UvrA subunits dissociate and the UvrB-DNA preincision complex is formed. This complex is subsequently bound by UvrC and the second UvrB is released. If no lesion is found, the DNA wraps around the other UvrB subunit that will check the other stand for damage. This Streptococcus pyogenes serotype M3 (strain ATCC BAA-595 / MGAS315) protein is UvrABC system protein B.